A 333-amino-acid chain; its full sequence is GDP-mannose transporter GONST1 (333 aa).

The next 9 membrane-spanning stretches (helical) occupy residues 33-55 (ALLS…KFVL), 62-84 (AGIF…LSLM), 99-121 (VWFP…LKYI), 153-170 (VWAA…GGIT), 174-196 (FNAV…SLTL), 216-238 (SMVL…FFNE), 253-275 (FWMV…MWFL), 282-304 (TYSL…LFNV), and 308-325 (LQNS…VVFA).

The protein belongs to the nucleotide-sugar transporter family. GDP-Mannose:GMP antiporter (GMA) (TC 2.A.7.13) subfamily.

The protein localises to the golgi apparatus membrane. Functionally, involved in the import of GDP-mannose from the cytoplasm into the Golgi lumen. Required for the luminal synthesis of a variety of plant cell surface components. Is required for the correct mannosylation of the glycosylinositol phosphoceramides (GIPC). Can indifferently transport GDP-mannose, GDP-Glucose, GDP-Fucose or GDP-Galactose in vitro. This chain is GDP-mannose transporter GONST1, found in Arabidopsis thaliana (Mouse-ear cress).